The chain runs to 340 residues: Glycerol-3-phosphate dehydrogenase [NAD(P)+] (340 aa).

Positions 14, 15, 35, and 109 each coordinate NADPH. Residues Lys-109, Gly-138, and Thr-140 each contribute to the sn-glycerol 3-phosphate site. NADPH is bound at residue Ala-142. Sn-glycerol 3-phosphate contacts are provided by Lys-194, Asp-247, Ser-257, Arg-258, and Asn-259. Lys-194 functions as the Proton acceptor in the catalytic mechanism. Arg-258 lines the NADPH pocket. Residues Val-282 and Glu-284 each coordinate NADPH.

This sequence belongs to the NAD-dependent glycerol-3-phosphate dehydrogenase family.

The protein localises to the cytoplasm. The catalysed reaction is sn-glycerol 3-phosphate + NAD(+) = dihydroxyacetone phosphate + NADH + H(+). It carries out the reaction sn-glycerol 3-phosphate + NADP(+) = dihydroxyacetone phosphate + NADPH + H(+). Its pathway is membrane lipid metabolism; glycerophospholipid metabolism. Its function is as follows. Catalyzes the reduction of the glycolytic intermediate dihydroxyacetone phosphate (DHAP) to sn-glycerol 3-phosphate (G3P), the key precursor for phospholipid synthesis. This chain is Glycerol-3-phosphate dehydrogenase [NAD(P)+], found in Photorhabdus laumondii subsp. laumondii (strain DSM 15139 / CIP 105565 / TT01) (Photorhabdus luminescens subsp. laumondii).